Consider the following 471-residue polypeptide: MSNKYNNLLKEVAAKYASIILNDAKIKSLTSINSAEYLYDSFVEISKLPLEKKLPLKWKLITVKENICTKTNLTTAASNMLKDYNSPFDASIVESLKKAGGIILGKTNMDEFAMGVKSENNLFGRTVNPVVKDSNYDVGGSSGGAAAAIAADICYASVGSDTGGSIRLPAAYVGCVGFKPSFGRISRYGMLAFANSFDTVGIAANNVKGVTKVFNVLDHPDINDSTCLTKEARYFVKEQHKKLSRKPIKIGIPIDWNVSETHPNVLDKWNEFISLLKSNGYLVQEIQLPISLYANSVYSTMAYAEATSNLAKYNTIAFGNCLDEKFEEEIISSTARSFFLGDEVKKRLLLGAYSLARMNSSDLFSKARYVRRAIQLEFNKNFFLPSFSVDDPRGDIDFIVTPSFFNSSQPIETPSSYSHLSDTMLVPANMAGIPSVSIPFGTLNNGLPMGIQIMAQYLNDEDLLSFAGQFA.

Residues Lys64 and Ser141 each act as charge relay system in the active site. The Acyl-ester intermediate role is filled by Ser165.

It belongs to the amidase family. GatA subfamily. Subunit of the heterotrimeric GatCAB amidotransferase (AdT) complex, composed of A, B and C subunits.

The protein resides in the mitochondrion. It catalyses the reaction L-glutamyl-tRNA(Gln) + L-glutamine + ATP + H2O = L-glutaminyl-tRNA(Gln) + L-glutamate + ADP + phosphate + H(+). Allows the formation of correctly charged Gln-tRNA(Gln) through the transamidation of misacylated Glu-tRNA(Gln) in the mitochondria. The reaction takes place in the presence of glutamine and ATP through an activated gamma-phospho-Glu-tRNA(Gln). This Schizosaccharomyces pombe (strain 972 / ATCC 24843) (Fission yeast) protein is Glutamyl-tRNA(Gln) amidotransferase subunit A, mitochondrial.